Consider the following 383-residue polypeptide: Succinyl-diaminopimelate desuccinylase (383 aa).

His-73 contributes to the Zn(2+) binding site. The active site involves Asp-75. Asp-107 is a Zn(2+) binding site. Residue Glu-141 is the Proton acceptor of the active site. The Zn(2+) site is built by Glu-142, Glu-170, and His-356.

This sequence belongs to the peptidase M20A family. DapE subfamily. In terms of assembly, homodimer. The cofactor is Zn(2+). Requires Co(2+) as cofactor.

The enzyme catalyses N-succinyl-(2S,6S)-2,6-diaminopimelate + H2O = (2S,6S)-2,6-diaminopimelate + succinate. It participates in amino-acid biosynthesis; L-lysine biosynthesis via DAP pathway; LL-2,6-diaminopimelate from (S)-tetrahydrodipicolinate (succinylase route): step 3/3. In terms of biological role, catalyzes the hydrolysis of N-succinyl-L,L-diaminopimelic acid (SDAP), forming succinate and LL-2,6-diaminopimelate (DAP), an intermediate involved in the bacterial biosynthesis of lysine and meso-diaminopimelic acid, an essential component of bacterial cell walls. This Pseudomonas putida (strain W619) protein is Succinyl-diaminopimelate desuccinylase.